Consider the following 178-residue polypeptide: Large ribosomal subunit protein uL6 (178 aa).

It belongs to the universal ribosomal protein uL6 family. In terms of assembly, part of the 50S ribosomal subunit.

Functionally, this protein binds to the 23S rRNA, and is important in its secondary structure. It is located near the subunit interface in the base of the L7/L12 stalk, and near the tRNA binding site of the peptidyltransferase center. The chain is Large ribosomal subunit protein uL6 from Francisella tularensis subsp. tularensis (strain WY96-3418).